A 156-amino-acid polypeptide reads, in one-letter code: Small ribosomal subunit protein uS7 (156 aa).

The protein belongs to the universal ribosomal protein uS7 family. As to quaternary structure, part of the 30S ribosomal subunit. Contacts proteins S9 and S11.

In terms of biological role, one of the primary rRNA binding proteins, it binds directly to 16S rRNA where it nucleates assembly of the head domain of the 30S subunit. Is located at the subunit interface close to the decoding center, probably blocks exit of the E-site tRNA. The sequence is that of Small ribosomal subunit protein uS7 from Pediococcus pentosaceus (strain ATCC 25745 / CCUG 21536 / LMG 10740 / 183-1w).